The following is a 227-amino-acid chain: NADH-quinone oxidoreductase subunit C (227 aa).

The protein belongs to the complex I 30 kDa subunit family. In terms of assembly, NDH-1 is composed of 14 different subunits. Subunits NuoB, C, D, E, F, and G constitute the peripheral sector of the complex.

It localises to the cell inner membrane. The catalysed reaction is a quinone + NADH + 5 H(+)(in) = a quinol + NAD(+) + 4 H(+)(out). NDH-1 shuttles electrons from NADH, via FMN and iron-sulfur (Fe-S) centers, to quinones in the respiratory chain. The immediate electron acceptor for the enzyme in this species is believed to be ubiquinone. Couples the redox reaction to proton translocation (for every two electrons transferred, four hydrogen ions are translocated across the cytoplasmic membrane), and thus conserves the redox energy in a proton gradient. The protein is NADH-quinone oxidoreductase subunit C of Legionella pneumophila subsp. pneumophila (strain Philadelphia 1 / ATCC 33152 / DSM 7513).